The sequence spans 194 residues: Small ribosomal subunit protein uS7 (194 aa).

Belongs to the universal ribosomal protein uS7 family. Part of the 30S ribosomal subunit.

Functionally, one of the primary rRNA binding proteins, it binds directly to 16S rRNA where it nucleates assembly of the head domain of the 30S subunit. Is located at the subunit interface close to the decoding center. This Sulfurisphaera tokodaii (strain DSM 16993 / JCM 10545 / NBRC 100140 / 7) (Sulfolobus tokodaii) protein is Small ribosomal subunit protein uS7.